Reading from the N-terminus, the 96-residue chain is Carboxysome shell protein CsoS1A (96 aa).

Positions 7–92 (ALGMIETRGL…PHKEVEPVLT (86 aa)) constitute a BMC domain.

Belongs to the bacterial microcompartments protein family. CsoS1 subfamily. As to quaternary structure, homohexamer with a small central pore. Forms a CsoS2-CsoS1-RuBisCO complex.

The protein localises to the carboxysome. In terms of biological role, one of shell proteins of the carboxysome, a polyhedral inclusion where RuBisCO (ribulose bisphosphate carboxylase, ccbL-ccbS) is sequestered. Assembles into hexamers which make sheets that form the facets of the polyhedral carboxysome. The shell probably limits the diffusion of CO(2) into and out of the carboxysome. In Hydrogenovibrio crunogenus (strain DSM 25203 / XCL-2) (Thiomicrospira crunogena), this protein is Carboxysome shell protein CsoS1A.